Here is a 452-residue protein sequence, read N- to C-terminus: tRNA modification GTPase MnmE (452 aa).

Positions 21, 78, and 118 each coordinate (6S)-5-formyl-5,6,7,8-tetrahydrofolate. Positions 214 to 375 constitute a TrmE-type G domain; the sequence is GMKVVIAGRP…LREHLKQAMG (162 aa). Residue Asn-224 participates in K(+) binding. GTP contacts are provided by residues 224-229, 243-249, and 268-271; these read NAGKSS, TDIAGTT, and DTAG. Residue Ser-228 participates in Mg(2+) binding. Thr-243, Ile-245, and Thr-248 together coordinate K(+). Mg(2+) is bound at residue Thr-249. Lys-452 serves as a coordination point for (6S)-5-formyl-5,6,7,8-tetrahydrofolate.

This sequence belongs to the TRAFAC class TrmE-Era-EngA-EngB-Septin-like GTPase superfamily. TrmE GTPase family. In terms of assembly, homodimer. Heterotetramer of two MnmE and two MnmG subunits. The cofactor is K(+).

It is found in the cytoplasm. Functionally, exhibits a very high intrinsic GTPase hydrolysis rate. Involved in the addition of a carboxymethylaminomethyl (cmnm) group at the wobble position (U34) of certain tRNAs, forming tRNA-cmnm(5)s(2)U34. The chain is tRNA modification GTPase MnmE from Haemophilus influenzae (strain PittGG).